A 231-amino-acid chain; its full sequence is 2-C-methyl-D-erythritol 4-phosphate cytidylyltransferase (231 aa).

Belongs to the IspD/TarI cytidylyltransferase family. IspD subfamily.

The enzyme catalyses 2-C-methyl-D-erythritol 4-phosphate + CTP + H(+) = 4-CDP-2-C-methyl-D-erythritol + diphosphate. Its pathway is isoprenoid biosynthesis; isopentenyl diphosphate biosynthesis via DXP pathway; isopentenyl diphosphate from 1-deoxy-D-xylulose 5-phosphate: step 2/6. Catalyzes the formation of 4-diphosphocytidyl-2-C-methyl-D-erythritol from CTP and 2-C-methyl-D-erythritol 4-phosphate (MEP). The polypeptide is 2-C-methyl-D-erythritol 4-phosphate cytidylyltransferase (Xylella fastidiosa (strain 9a5c)).